Consider the following 620-residue polypeptide: Schwann cell myelin protein (620 aa).

An N-terminal signal peptide occupies residues methionine 1–serine 17. Residues alanine 18–proline 516 are Extracellular-facing. Residues methionine 28–leucine 106 form the Ig-like V-type domain. 3 cysteine pairs are disulfide-bonded: cysteine 35–cysteine 164, cysteine 40–cysteine 99, and cysteine 158–cysteine 216. Arginine 117 contributes to the N-acetylneuraminate binding site. 4 Ig-like C2-type domains span residues glycine 151–leucine 233, proline 239–alanine 322, proline 325–serine 407, and valine 414–glycine 495. Asparagine 222 carries N-linked (GlcNAc...) asparagine glycosylation. An intrachain disulfide couples cysteine 260 to cysteine 304. N-linked (GlcNAc...) asparagine glycosylation is found at asparagine 314 and asparagine 331. The cysteines at positions 346 and 391 are disulfide-linked. An N-linked (GlcNAc...) asparagine glycan is attached at asparagine 405. 2 disulfide bridges follow: cysteine 420/cysteine 429 and cysteine 431/cysteine 488. N-linked (GlcNAc...) asparagine glycosylation occurs at asparagine 449. A helical transmembrane segment spans residues valine 517–serine 536. Residues arginine 537 to lysine 620 are Cytoplasmic-facing. Disordered regions lie at residues lysine 539–leucine 562 and valine 583–lysine 620.

The protein belongs to the immunoglobulin superfamily. SIGLEC (sialic acid binding Ig-like lectin) family. As to expression, exclusively expressed by myelinating and nonmyelinating Schwann cells and oligodendrocytes.

It is found in the membrane. The protein is Schwann cell myelin protein (SMP) of Coturnix japonica (Japanese quail).